The following is a 51-amino-acid chain: Sperm protamine P1 (51 aa).

This sequence belongs to the protamine P1 family. As to expression, testis.

It is found in the nucleus. The protein localises to the chromosome. Its function is as follows. Protamines substitute for histones in the chromatin of sperm during the haploid phase of spermatogenesis. They compact sperm DNA into a highly condensed, stable and inactive complex. The sequence is that of Sperm protamine P1 (PRM1) from Trachypithecus francoisi (Francois' leaf monkey).